A 218-amino-acid polypeptide reads, in one-letter code: Glutathione S-transferase D7 (218 aa).

Residues M1–E82 enclose the GST N-terminal domain. Residues S11, H52–I54, and E66–R68 contribute to the glutathione site. The region spanning D88–T207 is the GST C-terminal domain.

This sequence belongs to the GST superfamily. Theta family. Homodimer.

The catalysed reaction is RX + glutathione = an S-substituted glutathione + a halide anion + H(+). Functionally, conjugation of reduced glutathione to a wide number of exogenous and endogenous hydrophobic electrophiles. In Anopheles gambiae (African malaria mosquito), this protein is Glutathione S-transferase D7.